A 306-amino-acid polypeptide reads, in one-letter code: Enoyl-CoA isomerase/hydratase MYCGRDRAFT_76805 (306 aa).

Substrate contacts are provided by residues 103-107 and Gly-150; that span reads AGADL.

The protein belongs to the enoyl-CoA hydratase/isomerase family.

The catalysed reaction is a (3S)-3-hydroxyacyl-CoA = a (2E)-enoyl-CoA + H2O. It catalyses the reaction a 4-saturated-(3S)-3-hydroxyacyl-CoA = a (3E)-enoyl-CoA + H2O. It participates in siderophore biosynthesis. Enoyl-CoA isomerase/hydratase involved in the biosynthesis of a ferrichrome A-like siderophore which may contribute to organismal virulence. The first step of siderophore biosynthesis is performed by the HMG-CoA synthase (HMGS) MYCGRDRAFT_54740 which catalyzes the generation of HMG-CoA and CoA using acetoacetyl-CoA and acetyl-CoA as substrates. The enoyl-CoA isomerase/hydratase MYCGRDRAFT_76805 then catalyzes the conversion of HMG-CoA to methylglutaconyl-CoA. The acyltransferase MYCGRDRAFT_85486 then fuses methylglutaconyl-CoA with hydroxyornithine to yield methylglutaconyl hydroxyornithine. Methylglutaconyl hydroxyornithine is then available for use by the nonribosomal peptide synthetase NRPS2 to generate the ferrichrome A-like siderophore. This chain is Enoyl-CoA isomerase/hydratase MYCGRDRAFT_76805, found in Zymoseptoria tritici (strain CBS 115943 / IPO323) (Speckled leaf blotch fungus).